A 353-amino-acid polypeptide reads, in one-letter code: Mitochondrial import inner membrane translocase subunit TIM50 (353 aa).

A mitochondrion-targeting transit peptide spans 1–21 (MAASAALFSRLRSGLRVGARG). The Mitochondrial matrix segment spans residues 22–65 (LCTRLAPPPPRTPEQVTEIANRGGSKAQGPQHQPGSEGPSYAKK). Residues 24–59 (TRLAPPPPRTPEQVTEIANRGGSKAQGPQHQPGSEG) form a disordered region. Residues 66–86 (IALWIAGLLGAGGTVSIVYIF) form a helical membrane-spanning segment. The Mitochondrial intermembrane segment spans residues 87-353 (GNNPVDENGT…SRLWPRSKQP (267 aa)). Residues 143-286 (YYQPPYTLVL…LDLSAFLKTI (144 aa)) enclose the FCP1 homology domain. Ser-341 carries the phosphoserine modification.

The protein belongs to the TIM50 family. In terms of assembly, component of the TIM23 complex at least composed of TIMM23, TIMM17 (TIMM17A or TIMM17B) and TIMM50; within this complex, directly interacts with TIMM23. The complex interacts with the TIMM44 component of the PAM complex and with DNAJC15.

Its subcellular location is the mitochondrion inner membrane. Essential component of the TIM23 complex, a complex that mediates the translocation of transit peptide-containing proteins across the mitochondrial inner membrane. Has some phosphatase activity in vitro; however such activity may not be relevant in vivo. In Mus musculus (Mouse), this protein is Mitochondrial import inner membrane translocase subunit TIM50 (Timm50).